The sequence spans 204 residues: 3-isopropylmalate dehydratase small subunit (204 aa).

This sequence belongs to the LeuD family. LeuD type 1 subfamily. As to quaternary structure, heterodimer of LeuC and LeuD.

The catalysed reaction is (2R,3S)-3-isopropylmalate = (2S)-2-isopropylmalate. The protein operates within amino-acid biosynthesis; L-leucine biosynthesis; L-leucine from 3-methyl-2-oxobutanoate: step 2/4. In terms of biological role, catalyzes the isomerization between 2-isopropylmalate and 3-isopropylmalate, via the formation of 2-isopropylmaleate. This Psychromonas ingrahamii (strain DSM 17664 / CCUG 51855 / 37) protein is 3-isopropylmalate dehydratase small subunit.